We begin with the raw amino-acid sequence, 769 residues long: Elongation factor G, mitochondrial (769 aa).

The N-terminal 42 residues, 1–42 (MSKFLRGISSISSASLKARASNFGVFHGVCSARNLHQSRLCL), are a transit peptide targeting the mitochondrion. A tr-type G domain is found at 74-356 (TRLRNIGVSA…AVVDYLPQPN (283 aa)). Residues 83-90 (AHIDSGKT), 154-158 (DTPGH), and 208-211 (NKMD) contribute to the GTP site.

This sequence belongs to the TRAFAC class translation factor GTPase superfamily. Classic translation factor GTPase family. EF-G/EF-2 subfamily.

The protein localises to the mitochondrion. It participates in protein biosynthesis; polypeptide chain elongation. In terms of biological role, mitochondrial GTPase that catalyzes the GTP-dependent ribosomal translocation step during translation elongation. During this step, the ribosome changes from the pre-translocational (PRE) to the post-translocational (POST) state as the newly formed A-site-bound peptidyl-tRNA and P-site-bound deacylated tRNA move to the P and E sites, respectively. Catalyzes the coordinated movement of the two tRNA molecules, the mRNA and conformational changes in the ribosome. The chain is Elongation factor G, mitochondrial from Debaryomyces hansenii (strain ATCC 36239 / CBS 767 / BCRC 21394 / JCM 1990 / NBRC 0083 / IGC 2968) (Yeast).